Consider the following 535-residue polypeptide: GMP synthase [glutamine-hydrolyzing] (535 aa).

The Glutamine amidotransferase type-1 domain occupies 24–217 (KILIVDFGSQ…VRNISGLGGD (194 aa)). Cysteine 101 acts as the Nucleophile in catalysis. Residues histidine 191 and glutamate 193 contribute to the active site. The 193-residue stretch at 218 to 410 (WTMHAFREEE…LGLPDVFVGR (193 aa)) folds into the GMPS ATP-PPase domain. 245–251 (SGGVDSA) serves as a coordination point for ATP.

Homodimer.

It carries out the reaction XMP + L-glutamine + ATP + H2O = GMP + L-glutamate + AMP + diphosphate + 2 H(+). The protein operates within purine metabolism; GMP biosynthesis; GMP from XMP (L-Gln route): step 1/1. Catalyzes the synthesis of GMP from XMP. In Bradyrhizobium sp. (strain ORS 278), this protein is GMP synthase [glutamine-hydrolyzing].